The chain runs to 195 residues: Protease (195 aa).

The Peptidase A2 domain maps to 71-149; sequence ALMLVDTGAE…DKWQILGRDV (79 aa). Asp76 is an active-site residue.

The protein is Protease of Bos taurus (Bovine).